The following is a 200-amino-acid chain: Pyridoxal 5'-phosphate synthase subunit PdxT (200 aa).

52-54 (GES) contributes to the L-glutamine binding site. C84 acts as the Nucleophile in catalysis. Residues R115 and 143–144 (IR) each bind L-glutamine. Residues H179 and E181 each act as charge relay system in the active site.

Belongs to the glutaminase PdxT/SNO family. In terms of assembly, in the presence of PdxS, forms a dodecamer of heterodimers. Only shows activity in the heterodimer.

It catalyses the reaction aldehydo-D-ribose 5-phosphate + D-glyceraldehyde 3-phosphate + L-glutamine = pyridoxal 5'-phosphate + L-glutamate + phosphate + 3 H2O + H(+). The enzyme catalyses L-glutamine + H2O = L-glutamate + NH4(+). The protein operates within cofactor biosynthesis; pyridoxal 5'-phosphate biosynthesis. In terms of biological role, catalyzes the hydrolysis of glutamine to glutamate and ammonia as part of the biosynthesis of pyridoxal 5'-phosphate. The resulting ammonia molecule is channeled to the active site of PdxS. In Methanosarcina barkeri (strain Fusaro / DSM 804), this protein is Pyridoxal 5'-phosphate synthase subunit PdxT.